Here is a 108-residue protein sequence, read N- to C-terminus: Urease subunit beta (108 aa).

Belongs to the urease beta subunit family. As to quaternary structure, heterotrimer of UreA (gamma), UreB (beta) and UreC (alpha) subunits. Three heterotrimers associate to form the active enzyme.

Its subcellular location is the cytoplasm. The enzyme catalyses urea + 2 H2O + H(+) = hydrogencarbonate + 2 NH4(+). It functions in the pathway nitrogen metabolism; urea degradation; CO(2) and NH(3) from urea (urease route): step 1/1. This chain is Urease subunit beta, found in Proteus hauseri.